A 449-amino-acid polypeptide reads, in one-letter code: Bifunctional protein GlmU (449 aa).

The tract at residues 1-230 (MASSKLAVIV…EAELLGVNAR (230 aa)) is pyrophosphorylase. Residues 11–14 (LAAG), lysine 25, glutamine 74, 79–80 (GT), 102–104 (YGD), glycine 142, glutamate 156, asparagine 171, and asparagine 228 contribute to the UDP-N-acetyl-alpha-D-glucosamine site. Residue aspartate 104 coordinates Mg(2+). Position 228 (asparagine 228) interacts with Mg(2+). The linker stretch occupies residues 231–251 (SELAVAEALVQARLREAAMDN). Residues 252 to 449 (GATLIDPATV…QQAAKKAKKD (198 aa)) form an N-acetyltransferase region. UDP-N-acetyl-alpha-D-glucosamine contacts are provided by arginine 317 and lysine 335. Histidine 347 acts as the Proton acceptor in catalysis. Tyrosine 350 and asparagine 361 together coordinate UDP-N-acetyl-alpha-D-glucosamine. Acetyl-CoA is bound by residues alanine 364, 370-371 (NY), serine 389, alanine 407, and arginine 424.

It in the N-terminal section; belongs to the N-acetylglucosamine-1-phosphate uridyltransferase family. In the C-terminal section; belongs to the transferase hexapeptide repeat family. In terms of assembly, homotrimer. Requires Mg(2+) as cofactor.

It localises to the cytoplasm. The catalysed reaction is alpha-D-glucosamine 1-phosphate + acetyl-CoA = N-acetyl-alpha-D-glucosamine 1-phosphate + CoA + H(+). The enzyme catalyses N-acetyl-alpha-D-glucosamine 1-phosphate + UTP + H(+) = UDP-N-acetyl-alpha-D-glucosamine + diphosphate. The protein operates within nucleotide-sugar biosynthesis; UDP-N-acetyl-alpha-D-glucosamine biosynthesis; N-acetyl-alpha-D-glucosamine 1-phosphate from alpha-D-glucosamine 6-phosphate (route II): step 2/2. It functions in the pathway nucleotide-sugar biosynthesis; UDP-N-acetyl-alpha-D-glucosamine biosynthesis; UDP-N-acetyl-alpha-D-glucosamine from N-acetyl-alpha-D-glucosamine 1-phosphate: step 1/1. Its pathway is bacterial outer membrane biogenesis; LPS lipid A biosynthesis. In terms of biological role, catalyzes the last two sequential reactions in the de novo biosynthetic pathway for UDP-N-acetylglucosamine (UDP-GlcNAc). The C-terminal domain catalyzes the transfer of acetyl group from acetyl coenzyme A to glucosamine-1-phosphate (GlcN-1-P) to produce N-acetylglucosamine-1-phosphate (GlcNAc-1-P), which is converted into UDP-GlcNAc by the transfer of uridine 5-monophosphate (from uridine 5-triphosphate), a reaction catalyzed by the N-terminal domain. This Paramagnetospirillum magneticum (strain ATCC 700264 / AMB-1) (Magnetospirillum magneticum) protein is Bifunctional protein GlmU.